A 108-amino-acid chain; its full sequence is Glutaredoxin-1 (108 aa).

The 104-residue stretch at glutamate 3–arginine 106 folds into the Glutaredoxin domain. Residues cysteine 23 and cysteine 26 are joined by a disulfide bond.

This sequence belongs to the glutaredoxin family.

The protein resides in the virion. Functionally, displays thioltransferase and dehydroascorbate reductase activities. The chain is Glutaredoxin-1 (OPG075) from Cynomys gunnisoni (Gunnison's prairie dog).